The sequence spans 184 residues: Nucleoporin-62 C-terminal-like protein (184 aa).

Positions 117 to 151 form a coiled coil; sequence RILHGEVNKVKLDQKRLEQELDFILSQQQELEFLL.

The protein belongs to the nucleoporin NSP1/NUP62 family.

This Homo sapiens (Human) protein is Nucleoporin-62 C-terminal-like protein (NUP62CL).